The primary structure comprises 215 residues: MKIVLLGPPGAGKGTQAKSISNRYSIPHISTGDIFRKNISENTPLGMEARSYMDKGLLVPDEVTINMVKDRLQEDDCLSGYLLDGFPRTVAQAEALNEFLENRNEQLDTALLIDVPSEFILDRMTGRRVCTSCGGSFHIKFNPPTIDGKCNLCGSDIVQRKDDTVETVKERIDVYDKQTQPLIEFYKSKNLLSMVDGTKAIDQVFEDICKLLGEQ.

Residue 10 to 15 (GAGKGT) coordinates ATP. An NMP region spans residues 30-59 (STGDIFRKNISENTPLGMEARSYMDKGLLV). AMP is bound by residues Thr31, Arg36, 57 to 59 (LLV), 85 to 88 (GFPR), and Gln92. The LID stretch occupies residues 126–163 (GRRVCTSCGGSFHIKFNPPTIDGKCNLCGSDIVQRKDD). Position 127 (Arg127) interacts with ATP. Zn(2+)-binding residues include Cys130 and Cys133. 136 to 137 (SF) is an ATP binding site. Zn(2+) contacts are provided by Cys150 and Cys153. 2 residues coordinate AMP: Arg160 and Arg171. Lys199 contributes to the ATP binding site.

It belongs to the adenylate kinase family. Monomer.

The protein localises to the cytoplasm. It carries out the reaction AMP + ATP = 2 ADP. The protein operates within purine metabolism; AMP biosynthesis via salvage pathway; AMP from ADP: step 1/1. Functionally, catalyzes the reversible transfer of the terminal phosphate group between ATP and AMP. Plays an important role in cellular energy homeostasis and in adenine nucleotide metabolism. The polypeptide is Adenylate kinase (Clostridium botulinum (strain Alaska E43 / Type E3)).